A 390-amino-acid chain; its full sequence is Elongation factor Ts 2, mitochondrial (390 aa).

The transit peptide at methionine 1 to alanine 24 directs the protein to the mitochondrion. Residues serine 30–serine 40 show a composition bias toward low complexity. The tract at residues serine 30 to glutamine 54 is disordered.

The protein belongs to the EF-Ts family.

The protein resides in the mitochondrion. Functionally, associates with the EF-Tu.GDP complex and induces the exchange of GDP to GTP. It remains bound to the aminoacyl-tRNA.EF-Tu.GTP complex up to the GTP hydrolysis stage on the ribosome. This is Elongation factor Ts 2, mitochondrial from Thalassiosira pseudonana (Marine diatom).